The sequence spans 170 residues: dCTP pyrophosphatase 1 (170 aa).

Residues 1–27 (MSVAGGEIRGDTGGEDTAAPGRFSFSP) form a disordered region. Serine 2 bears the N-acetylserine mark. Serine 2 is subject to Phosphoserine. Threonine 12 carries the phosphothreonine modification. Substrate is bound by residues histidine 38 and 47–51 (WEQFH). Positions 63 and 66 each coordinate Mg(2+). Position 73 (tryptophan 73) interacts with substrate. The residue at position 85 (serine 85) is a Phosphoserine. Glutamate 95 and aspartate 98 together coordinate Mg(2+). Tyrosine 102 serves as a coordination point for substrate. The disordered stretch occupies residues 147-170 (GAISEDQAVGPADIPCDSTGQTST).

As to quaternary structure, homotetramer. It depends on Mg(2+) as a cofactor.

Its subcellular location is the mitochondrion. It is found in the nucleus. The protein localises to the cytoplasm. The protein resides in the cytosol. The catalysed reaction is dCTP + H2O = dCMP + diphosphate + H(+). Its activity is regulated as follows. Inhibited by the reaction end product PPi. Inhibited by dCDP. Inhibited by triptolide. Functionally, hydrolyzes deoxynucleoside triphosphates (dNTPs) to the corresponding nucleoside monophosphates. Has a strong preference for dCTP and its analogs including 5-iodo-dCTP and 5-methyl-dCTP for which it may even have a higher efficiency. May protect DNA or RNA against the incorporation of these genotoxic nucleotide analogs through their catabolism. The protein is dCTP pyrophosphatase 1 of Homo sapiens (Human).